The sequence spans 938 residues: Isoleucine--tRNA ligase (938 aa).

The 'HIGH' region motif lies at 58-68 (PYANGNIHIGH). Glu562 is an L-isoleucyl-5'-AMP binding site. Residues 603-607 (KMSKS) carry the 'KMSKS' region motif. Lys606 is a binding site for ATP. Positions 901, 904, 921, and 924 each coordinate Zn(2+).

This sequence belongs to the class-I aminoacyl-tRNA synthetase family. IleS type 1 subfamily. In terms of assembly, monomer. Requires Zn(2+) as cofactor.

It is found in the cytoplasm. It carries out the reaction tRNA(Ile) + L-isoleucine + ATP = L-isoleucyl-tRNA(Ile) + AMP + diphosphate. In terms of biological role, catalyzes the attachment of isoleucine to tRNA(Ile). As IleRS can inadvertently accommodate and process structurally similar amino acids such as valine, to avoid such errors it has two additional distinct tRNA(Ile)-dependent editing activities. One activity is designated as 'pretransfer' editing and involves the hydrolysis of activated Val-AMP. The other activity is designated 'posttransfer' editing and involves deacylation of mischarged Val-tRNA(Ile). The sequence is that of Isoleucine--tRNA ligase from Actinobacillus pleuropneumoniae serotype 5b (strain L20).